The sequence spans 644 residues: Type III restriction-modification enzyme EcoP15I Mod subunit (644 aa).

Positions 123–126 (DPPY) are binding of S-adenosyl methionine.

Belongs to the N(4)/N(6)-methyltransferase family. Forms a homodimer capable of methylating the target sequence in the absence of Res. A heterotetramer with stoichiometry Res(2)Mod(2). A heterotrimer with stoichiometry Res(1)Mod(2).

It catalyses the reaction a 2'-deoxyadenosine in DNA + S-adenosyl-L-methionine = an N(6)-methyl-2'-deoxyadenosine in DNA + S-adenosyl-L-homocysteine + H(+). A beta subtype methylase that binds the system-specific DNA recognition site 5'-CAGCAG-3' and methylates A-5 (of only 1 strand as the other does not have an A residue). DNA restriction requires both the Res and Mod subunits. The A-5 nucleotide flips into the catalytic pocket of one Mod subunit for modification, while the other Mod subunit makes most of the DNA sequence-specific contacts. This is Type III restriction-modification enzyme EcoP15I Mod subunit from Escherichia coli.